The sequence spans 470 residues: Sulfate adenylyltransferase subunit 1 (470 aa).

The region spanning 22–236 is the tr-type G domain; it reads KELLRFITCG…YLETIKIDYA (215 aa). Residues 31–38 form a G1 region; sequence GSVDDGKS. 31-38 is a GTP binding site; the sequence is GSVDDGKS. A G2 region spans residues 89–93; it reads GITID. The interval 110–113 is G3; that stretch reads DTPG. GTP contacts are provided by residues 110–114 and 165–168; these read DTPGH and NKMD. A G4 region spans residues 165-168; sequence NKMD. A G5 region spans residues 202 to 204; it reads SAL.

The protein belongs to the TRAFAC class translation factor GTPase superfamily. Classic translation factor GTPase family. CysN/NodQ subfamily. As to quaternary structure, heterodimer composed of CysD, the smaller subunit, and CysN.

It catalyses the reaction sulfate + ATP + H(+) = adenosine 5'-phosphosulfate + diphosphate. The protein operates within sulfur metabolism; hydrogen sulfide biosynthesis; sulfite from sulfate: step 1/3. With CysD forms the ATP sulfurylase (ATPS) that catalyzes the adenylation of sulfate producing adenosine 5'-phosphosulfate (APS) and diphosphate, the first enzymatic step in sulfur assimilation pathway. APS synthesis involves the formation of a high-energy phosphoric-sulfuric acid anhydride bond driven by GTP hydrolysis by CysN coupled to ATP hydrolysis by CysD. This chain is Sulfate adenylyltransferase subunit 1, found in Francisella tularensis subsp. novicida (strain U112).